Here is a 28-residue protein sequence, read N- to C-terminus: Arylalkyl acylamidase (28 aa).

As to quaternary structure, homotetramer.

The enzyme catalyses an N-acetylarylalkylamine + H2O = an aralkylamine + acetate. With respect to regulation, activated by divalent metal ions. Inhibited by certain thiol reagents. Shows a strict specificity for N-acetyl arylalkylamines but not acetanilide derivatives. This chain is Arylalkyl acylamidase, found in Pseudomonas putida (Arthrobacter siderocapsulatus).